We begin with the raw amino-acid sequence, 85 residues long: Exodeoxyribonuclease 7 small subunit (85 aa).

This sequence belongs to the XseB family. Heterooligomer composed of large and small subunits.

The protein localises to the cytoplasm. The enzyme catalyses Exonucleolytic cleavage in either 5'- to 3'- or 3'- to 5'-direction to yield nucleoside 5'-phosphates.. Its function is as follows. Bidirectionally degrades single-stranded DNA into large acid-insoluble oligonucleotides, which are then degraded further into small acid-soluble oligonucleotides. The polypeptide is Exodeoxyribonuclease 7 small subunit (Mycobacterium bovis (strain ATCC BAA-935 / AF2122/97)).